The primary structure comprises 748 residues: Histone-lysine N-methyltransferase EZH2 (748 aa).

The span at 183 to 199 shows a compositional bias: acidic residues; it reads DYEDDEDGEDNQDDERD. Disordered regions lie at residues 183-215 and 347-428; these read DYEDDEDGEDNQDDERDDITKDQDDNMEEKETL and TPPK…NIEP. A compositionally biased stretch (basic and acidic residues) spans 200-215; it reads DITKDQDDNMEEKETL. A compositionally biased stretch (basic residues) spans 348–359; that stretch reads PPKRPSGRRRGR. The segment covering 376–387 has biased composition (basic and acidic residues); the sequence is EAKDTDSDREAG. The 103-residue stretch at 505–607 folds into the CXC domain; the sequence is CRKIQLKKDG…SKNVSCKNCS (103 aa). Residues 614-729 enclose the SET domain; it reads KHLLLAPSDV…TGEELFFDYR (116 aa).

It belongs to the class V-like SAM-binding methyltransferase superfamily. Histone-lysine methyltransferase family. EZ subfamily. In terms of assembly, component of the prc2/eed-ezh2 complex.

Its subcellular location is the nucleus. It carries out the reaction L-lysyl(27)-[histone H3] + 3 S-adenosyl-L-methionine = N(6),N(6),N(6)-trimethyl-L-lysyl(27)-[histone H3] + 3 S-adenosyl-L-homocysteine + 3 H(+). In terms of biological role, polycomb group (PcG) protein. Catalytic subunit of the prc2/eed-ezh2 complex, which methylates 'Lys-9' and 'Lys-27' of histone H3, leading to transcriptional repression of the affected target gene. May regulate the circadian clock via histone methylation at the promoter of the circadian genes. The sequence is that of Histone-lysine N-methyltransferase EZH2 (ezh2-b) from Xenopus laevis (African clawed frog).